The sequence spans 587 residues: Glutaconyl-CoA decarboxylase subunit alpha (587 aa).

The CoA carboxyltransferase N-terminal domain maps to 31–298; the sequence is LKKIEEEIHQ…YDPEFFRVDD (268 aa). The interval 31–558 is carboxyltransferase; that stretch reads LKKIEEEIHQ…RGYVEAFTEA (528 aa). The CoA carboxyltransferase C-terminal domain occupies 295-558; it reads RVDDPKAPAF…RGYVEAFTEA (264 aa).

Heterooctamer consisting of two alpha, two beta, two gamma and two delta subunits.

The enzyme catalyses (2E)-glutaconyl-CoA + Na(+)(in) + H(+) = (2E)-butenoyl-CoA + Na(+)(out) + CO2. The protein operates within amino-acid degradation; L-glutamate degradation via hydroxyglutarate pathway; crotonoyl-CoA from L-glutamate: step 5/5. Functionally, decarboxylase subunit of the primary sodium pump glutaconyl-CoA decarboxylase (GCD). In Acidaminococcus fermentans (strain ATCC 25085 / DSM 20731 / CCUG 9996 / CIP 106432 / VR4), this protein is Glutaconyl-CoA decarboxylase subunit alpha (gcdA).